Here is a 1225-residue protein sequence, read N- to C-terminus: Hybrid signal transduction histidine kinase C (1225 aa).

Residues 8–28 traverse the membrane as a helical segment; sequence GFLLSTLFFTIISIILFYFFI. Low complexity predominate over residues 313–356; it reads LSPRSLSSSSSSSPSSSNNNGNTNNSGSLSPRSSNSNGSAVSPR. A disordered region spans residues 313-407; the sequence is LSPRSLSSSS…SNGTISSPRT (95 aa). Polar residues predominate over residues 357 to 368; it reads NVSSNSMSPRGQ. Residues 370–388 are compositionally biased toward low complexity; that stretch reads SDRSISSPRGSSSSSSSSS. The segment covering 389–407 has biased composition (polar residues); sequence NELAISPRNSNGTISSPRT. The Histidine kinase domain occupies 426 to 653; sequence HLSHELRTPI…TFHFVIPLET (228 aa). Residue His429 is modified to Phosphohistidine; by autocatalysis. Positions 669–784 constitute a Response regulatory 1 domain; sequence SVLVVDKNPY…HLVACLLASM (116 aa). At Asp721 the chain carries 4-aspartylphosphate. Disordered stretches follow at residues 809–832, 941–974, and 1021–1076; these read NNINNNSNNNNNNMQTHNSNSVYG, DDDSNNYCNTTGTMDSIDEINKNNYSDSESDELN, and YLSP…PRAP. Positions 945-954 are enriched in polar residues; sequence NNYCNTTGTM. Residues 1023–1037 are compositionally biased toward low complexity; it reads SPRSMNNNNGNNDNG. Over residues 1058–1072 the composition is skewed to polar residues; the sequence is TSDTSSLAQSPNSLS. The region spanning 1078–1200 is the Response regulatory 2 domain; the sequence is KIMILDDNPV…CLELILRKWE (123 aa). Position 1127 is a 4-aspartylphosphate (Asp1127).

The protein localises to the membrane. The catalysed reaction is ATP + protein L-histidine = ADP + protein N-phospho-L-histidine.. Functionally, acts in a signal transduction pathway that regulates the slug versus culmination choice. Believed to be the first component of a phosphorelay that couples the sensing of ammonia to the modulation of PKA activity and hence activates culmination and spore germination. Ammonium transporters amtA and amtC are thought to respectively activate and inhibit dhkC phosphorelay. This protein probably undergoes an ATP-dependent autophosphorylation at conserved His residue in the kinase core, and a phosphoryl group is then transferred to a conserved aspartate residue in the receiver domain. In Dictyostelium discoideum (Social amoeba), this protein is Hybrid signal transduction histidine kinase C (dhkC).